The sequence spans 50 residues: uncharacterized protein (50 aa).

The helical transmembrane segment at 10-29 (LFFYYPFFIIFLYIYLVFFI) threads the bilayer.

Its subcellular location is the plastid. It is found in the chloroplast membrane. This is an uncharacterized protein from Marchantia polymorpha (Common liverwort).